A 117-amino-acid polypeptide reads, in one-letter code: MARVTVEDCVDKVPNRFELVLLAAHRAREISAGAAITVDRDNDKNPVVSLREIADETQSADDLRERLIEANQTQIEVDEPEEDQMALLMGAESDRPVEDDMSEERLLRALMEAQGQG.

Belongs to the RNA polymerase subunit omega family. In terms of assembly, the RNAP catalytic core consists of 2 alpha, 1 beta, 1 beta' and 1 omega subunit. When a sigma factor is associated with the core the holoenzyme is formed, which can initiate transcription.

It carries out the reaction RNA(n) + a ribonucleoside 5'-triphosphate = RNA(n+1) + diphosphate. Its function is as follows. Promotes RNA polymerase assembly. Latches the N- and C-terminal regions of the beta' subunit thereby facilitating its interaction with the beta and alpha subunits. The protein is DNA-directed RNA polymerase subunit omega of Ruegeria pomeroyi (strain ATCC 700808 / DSM 15171 / DSS-3) (Silicibacter pomeroyi).